A 235-amino-acid chain; its full sequence is Putative cobalt transport protein CbiM 2 (235 aa).

The next 7 helical transmembrane spans lie at 9-29 (PAGWCLVWWLIALPFLVMGII), 41-61 (YLPLLGVCGAFIFILSALKLP), 80-100 (FGYCVTAVVGAIVLLFQALLL), 107-127 (TMGANMVSMAIGGPIAGYAVY), 135-155 (INIYVTVFLASAVADIVTYII), 160-180 (LALAYPAQVGGFLASFSAFFS), and 181-201 (IFAITQIPLSIMEGVVLALVF).

The protein belongs to the CbiM family. In terms of assembly, forms an energy-coupling factor (ECF) transporter complex composed of an ATP-binding protein (A component, CbiO), a transmembrane protein (T component, CbiQ) and 2 possible substrate-capture proteins (S components, CbiM and CbiN) of unknown stoichimetry.

The protein localises to the cell membrane. Its pathway is cofactor biosynthesis; adenosylcobalamin biosynthesis. In terms of biological role, part of the energy-coupling factor (ECF) transporter complex CbiMNOQ involved in cobalt import. The polypeptide is Putative cobalt transport protein CbiM 2 (Methanosphaerula palustris (strain ATCC BAA-1556 / DSM 19958 / E1-9c)).